The primary structure comprises 610 residues: Transducer of Cdc42-dependent actin assembly protein 2 homolog (610 aa).

Positions 1 to 267 (MIPVSRFFTV…EVGKIDAEGD (267 aa)) constitute an F-BAR domain. The disordered stretch occupies residues 283–315 (APFEIEDLGDPKNCDSRTNDSADGSGGKLLKSS). Residues 291-302 (GDPKNCDSRTND) are compositionally biased toward basic and acidic residues. The REM-1 domain occupies 352–429 (SKPAHVRLSC…IHNLKEFYAM (78 aa)). Positions 355–385 (AHVRLSCLRSKIRDMEKQLEQAIQGREGITR) form a coiled coil. Disordered regions lie at residues 436 to 487 (EGQE…SSKN) and 499 to 519 (LISS…RRAE). Residues 437–449 (GQERSFGGRDTPD) are compositionally biased toward basic and acidic residues. Low complexity predominate over residues 453-464 (SMSGSSTNQSSS). Residues 475-487 (AGNSSSADDSSKN) are compositionally biased toward polar residues. Positions 501–513 (SSPKTSKSSTPTP) are enriched in low complexity. The 64-residue stretch at 547 to 610 (ETAVTVTALF…VPTSYLQFPQ (64 aa)) folds into the SH3 domain.

This sequence belongs to the FNBP1 family. Interacts (via SH3 domain) with wsp-1 and abi-1. Interacts with cdc-42 and (via SH3 domain) with wve-1.

It localises to the cell junction. Its subcellular location is the cell membrane. It is found in the cytoplasmic vesicle. The protein localises to the cytoplasm. The protein resides in the recycling endosome. Plays a role in protein trafficking, actin organization and embryonic morphogenesis. Potentially acts as a cdc-42 effector. May play a role in egg laying. Together with toca-1, is required for protein trafficking regulating yolk protein clathrin-mediated endocytosis by oocytes during oogenesis and retrograde recycling and the sorting of recycling endosome cargo proteins such as mig-14. Also, together with toca-2, controls the distribution of actin at cell junctions. The polypeptide is Transducer of Cdc42-dependent actin assembly protein 2 homolog (Caenorhabditis elegans).